We begin with the raw amino-acid sequence, 122 residues long: Small ribosomal subunit protein uS13 (122 aa).

Positions 97–122 (PVRGQRTHTNARTRKGPAKAIAGKKK) are disordered.

It belongs to the universal ribosomal protein uS13 family. As to quaternary structure, part of the 30S ribosomal subunit. Forms a loose heterodimer with protein S19. Forms two bridges to the 50S subunit in the 70S ribosome.

Its function is as follows. Located at the top of the head of the 30S subunit, it contacts several helices of the 16S rRNA. In the 70S ribosome it contacts the 23S rRNA (bridge B1a) and protein L5 of the 50S subunit (bridge B1b), connecting the 2 subunits; these bridges are implicated in subunit movement. Contacts the tRNAs in the A and P-sites. This Bartonella henselae (strain ATCC 49882 / DSM 28221 / CCUG 30454 / Houston 1) (Rochalimaea henselae) protein is Small ribosomal subunit protein uS13.